The following is a 215-amino-acid chain: Nucleoside triphosphate pyrophosphatase (215 aa).

The active-site Proton acceptor is the aspartate 80.

It belongs to the Maf family. It depends on a divalent metal cation as a cofactor.

Its subcellular location is the cytoplasm. The enzyme catalyses a ribonucleoside 5'-triphosphate + H2O = a ribonucleoside 5'-phosphate + diphosphate + H(+). It carries out the reaction a 2'-deoxyribonucleoside 5'-triphosphate + H2O = a 2'-deoxyribonucleoside 5'-phosphate + diphosphate + H(+). In terms of biological role, nucleoside triphosphate pyrophosphatase. May have a dual role in cell division arrest and in preventing the incorporation of modified nucleotides into cellular nucleic acids. This Leifsonia xyli subsp. xyli (strain CTCB07) protein is Nucleoside triphosphate pyrophosphatase.